Consider the following 545-residue polypeptide: Carboxylesterase 5A (545 aa).

The signal sequence occupies residues Met-1–Ala-28. An N-linked (GlcNAc...) (complex) asparagine glycan is attached at Asn-86. An intrachain disulfide couples Cys-94 to Cys-121. N-linked (GlcNAc...) asparagine glycosylation is present at Asn-134. Ser-226 serves as the catalytic Acyl-ester intermediate. Cys-281 and Cys-292 are joined by a disulfide. Glu-346 functions as the Charge relay system in the catalytic mechanism. 2 N-linked (GlcNAc...) asparagine glycosylation sites follow: Asn-363 and Asn-443. Residue His-454 is the Charge relay system of the active site.

The protein belongs to the type-B carboxylesterase/lipase family. In terms of processing, N-glycosylated; contains a fucosylated complex carbohydrate. As to expression, present at high level in urine. Expressed in the kidney proximal straight tubular cells and is secreted from the apical compartment of the cells into the urine (at protein level). In mature cats, it is present at higher level in intact males than in castrated males or in intact or spayed females.

Its subcellular location is the secreted. It carries out the reaction a carboxylic ester + H2O = an alcohol + a carboxylate + H(+). Functionally, carboxylesterase present at high level in urine that regulates production of felinine, a probable pheromone precursor. Probably acts by hydrolyzing the peptide bond of the felinine precursor 3-methylbutanol cyteinylglycine, producing felinine and glycine in cat urine. In Felis catus (Cat), this protein is Carboxylesterase 5A (CES5A).